The primary structure comprises 561 residues: Ankyrin repeat protein OPG189 (561 aa).

ANK repeat units follow at residues Tyr68–Lys98, Tyr172–Lys208, Tyr212–Ser242, Asn246–Ala275, Phe279–Ile307, Tyr342–Thr371, and Ser375–Ile404.

This sequence belongs to the orthopoxvirus OPG189 protein family.

Contributes to viral release without involving rearrangement of host actin. This chain is Ankyrin repeat protein OPG189 (OPG189), found in Cynomys gunnisoni (Gunnison's prairie dog).